The primary structure comprises 557 residues: MNLDNAKCFKQRVFIGNLTSEHLNKTVTIAGWVKRIKKLGELNFVIVGDKTNTIQVTCKNKEQVKYLTREDLVIVKGKLKRLDSVRFEITNPTITLFAKSKTPPLIIEDKTDALEEVRLRYRYLDLRRPVMQKRLALRHKVTLAVRNWLDQMGFIEVETPTLTKSTPEGARDFLVPARIREHSFYALPQSPQIYKQLLMVGGTEKYFQIAHVYRDEDSRKDRQPEHTQIDLEVAFYTKEMVMDLIQRLFVDVFRQVLNIKLKKPFPVLKFAEAFNRFGSDKPDLRYGFELEDCTDLFQDSPNQFTNLINAGGIVGGIQLPNLYLDEVSFKALRKLAKDNGVSLEFYSDKASSLKQPLDLPLAGTILLVAHKSKTQAWTALGAIRNELKYHLNLVKPNQYSFCWIVDFPLYEFDEKEQKWVSAHNMFSNPQPQWLVNFENHKAEALSEQYDLVLNGFELGSGSIRIHDPEVQTRLMQSLGVDPQQFGFVMEAYQYGAPVHAGMGLGLDRLMMIINNVDNIREVMAFPKNAQGIEMHTNAPDQVDIKDITTIWSKHPVK.

Glu168 is an L-aspartate binding site. The aspartate stretch occupies residues Gln192–Lys195. Arg214 lines the L-aspartate pocket. ATP contacts are provided by residues Arg214–Glu216 and Gln223. His423 contributes to the L-aspartate binding site. Glu457 contributes to the ATP binding site. Arg464 provides a ligand contact to L-aspartate. Residue Gly505–Arg508 coordinates ATP.

This sequence belongs to the class-II aminoacyl-tRNA synthetase family. Type 1 subfamily. In terms of assembly, homodimer.

The protein resides in the cytoplasm. The catalysed reaction is tRNA(Asp) + L-aspartate + ATP = L-aspartyl-tRNA(Asp) + AMP + diphosphate. Catalyzes the attachment of L-aspartate to tRNA(Asp) in a two-step reaction: L-aspartate is first activated by ATP to form Asp-AMP and then transferred to the acceptor end of tRNA(Asp). This Mycoplasma pneumoniae (strain ATCC 29342 / M129 / Subtype 1) (Mycoplasmoides pneumoniae) protein is Aspartate--tRNA ligase.